We begin with the raw amino-acid sequence, 663 residues long: MAU2 chromatid cohesion factor homolog (663 aa).

TPR repeat units lie at residues 455 to 488 and 495 to 528; these read GGFYYVQGLHAFHKNSFHEAKRFLRETLKMANAE and SCSLVLLSHVFLSIGNSKESMNMVTPAMQLASKI.

This sequence belongs to the SCC4/mau-2 family. As to quaternary structure, interacts with Nipped-B to form the cohesin loading complex.

The protein resides in the nucleus. Its subcellular location is the nucleoplasm. Required for association of the cohesin complex with chromatin during interphase. Plays a role in sister chromatid cohesion and normal progression through prometaphase. This chain is MAU2 chromatid cohesion factor homolog, found in Drosophila willistoni (Fruit fly).